Consider the following 255-residue polypeptide: tRNA (guanine-N(7)-)-methyltransferase (255 aa).

Residues 1 to 11 (MSISDNSRDQL) show a composition bias toward basic and acidic residues. The disordered stretch occupies residues 1-25 (MSISDNSRDQLGELPAGRPLQSDFD). The S-adenosyl-L-methionine site is built by Glu-83, Glu-108, Asp-135, and Asp-158. Asp-158 is an active-site residue. A substrate-binding site is contributed by Lys-162. Residues 164–169 (RHNKRR) are interaction with RNA. Residues Asp-194 and 232 to 235 (TKFE) each bind substrate.

The protein belongs to the class I-like SAM-binding methyltransferase superfamily. TrmB family.

It catalyses the reaction guanosine(46) in tRNA + S-adenosyl-L-methionine = N(7)-methylguanosine(46) in tRNA + S-adenosyl-L-homocysteine. The protein operates within tRNA modification; N(7)-methylguanine-tRNA biosynthesis. Functionally, catalyzes the formation of N(7)-methylguanine at position 46 (m7G46) in tRNA. The chain is tRNA (guanine-N(7)-)-methyltransferase from Corynebacterium glutamicum (strain ATCC 13032 / DSM 20300 / JCM 1318 / BCRC 11384 / CCUG 27702 / LMG 3730 / NBRC 12168 / NCIMB 10025 / NRRL B-2784 / 534).